A 501-amino-acid polypeptide reads, in one-letter code: Pentatricopeptide repeat-containing protein At4g14190, chloroplastic (501 aa).

The N-terminal 88 residues, 1–88 (MENLTTAQFL…SGSCPLRLLQ (88 aa)), are a transit peptide targeting the chloroplast. 5 PPR repeats span residues 130 to 160 (SENNYERIIRFLCEEKSMSEAIRAFRSMIDD), 166 to 200 (SLEIYNSIIHSYADDGKFEEAMFYLNHMKENGLLP), 201 to 235 (ITETYDGLIEAYGKWKMYDEIVLCLKRMESDGCVR), 236 to 270 (DHVTYNLLIREFSRGGLLKRMEQMYQSLMSRKMTL), and 271 to 305 (EPSTLLSMLEAYAEFGLIEKMEETCNKIIRFGISL).

It belongs to the PPR family. P subfamily.

Its subcellular location is the plastid. It localises to the chloroplast. This Arabidopsis thaliana (Mouse-ear cress) protein is Pentatricopeptide repeat-containing protein At4g14190, chloroplastic.